The sequence spans 186 residues: Elongation factor P (186 aa).

Belongs to the elongation factor P family.

Its subcellular location is the cytoplasm. It participates in protein biosynthesis; polypeptide chain elongation. Functionally, involved in peptide bond synthesis. Stimulates efficient translation and peptide-bond synthesis on native or reconstituted 70S ribosomes in vitro. Probably functions indirectly by altering the affinity of the ribosome for aminoacyl-tRNA, thus increasing their reactivity as acceptors for peptidyl transferase. This is Elongation factor P from Prochlorococcus marinus (strain MIT 9313).